We begin with the raw amino-acid sequence, 289 residues long: ATP synthase gamma chain (289 aa).

This sequence belongs to the ATPase gamma chain family. F-type ATPases have 2 components, CF(1) - the catalytic core - and CF(0) - the membrane proton channel. CF(1) has five subunits: alpha(3), beta(3), gamma(1), delta(1), epsilon(1). CF(0) has three main subunits: a, b and c.

It is found in the cell inner membrane. Produces ATP from ADP in the presence of a proton gradient across the membrane. The gamma chain is believed to be important in regulating ATPase activity and the flow of protons through the CF(0) complex. The polypeptide is ATP synthase gamma chain (Phocaeicola vulgatus (strain ATCC 8482 / DSM 1447 / JCM 5826 / CCUG 4940 / NBRC 14291 / NCTC 11154) (Bacteroides vulgatus)).